Reading from the N-terminus, the 85-residue chain is U4-theraphotoxin-Hhn1j (85 aa).

The signal sequence occupies residues 1–22 (MKVTLIAILTCAAVLVLHTTAA). Positions 23-48 (EELEAESQLMEVGMPDTELAAVDEER) are excised as a propeptide. 3 disulfides stabilise this stretch: cysteine 52/cysteine 66, cysteine 56/cysteine 77, and cysteine 71/cysteine 82.

This sequence belongs to the neurotoxin 12 (Hwtx-2) family. 02 (Hwtx-2) subfamily. Expressed by the venom gland.

It localises to the secreted. Postsynaptic neurotoxin. The protein is U4-theraphotoxin-Hhn1j of Cyriopagopus hainanus (Chinese bird spider).